The chain runs to 158 residues: MGQFTVVSLGLLAVFLSLSGAKGDNCPANWISRNGVCNKLFPDRKTWLEAEMYCRALKPGCHLASLHRDSDSTVLAWYISDHFKGAGHVWIGLRDTNRKRTWKWSDRTSTNYFSWNQGEPNNVQDNENCVHPWAPSGYLKWNDEPCASLHPFICQYKL.

The signal sequence occupies residues 1–23; that stretch reads MGQFTVVSLGLLAVFLSLSGAKG. Cystine bridges form between cysteine 26/cysteine 37, cysteine 54/cysteine 154, and cysteine 129/cysteine 146. Residues 33 to 155 form the C-type lectin domain; it reads RNGVCNKLFP…CASLHPFICQ (123 aa). The Mannose-binding motif lies at 119–121; sequence EPN. Ca(2+)-binding residues include glutamate 127, asparagine 142, and aspartate 143.

This sequence belongs to the true venom lectin family. In terms of tissue distribution, expressed by the venom gland.

Its subcellular location is the secreted. Mannose-binding lectin which recognizes specific carbohydrate structures and agglutinates a variety of animal cells by binding to cell-surface glycoproteins and glycolipids. May be a calcium-dependent lectin. The sequence is that of C-type lectin lectoxin-Enh7 from Pseudoferania polylepis (Macleay's water snake).